Here is an 880-residue protein sequence, read N- to C-terminus: Paramyosin (880 aa).

Residues 1 to 34 (MSGSLYRSPSAALYKSPSMSAFGGLPAAFGSMSV) form a nonhelical region region. The stretch at 35–859 (ADLGSLTRLE…LIRAKHRHQL (825 aa)) forms a coiled coil. The interval 860–880 (LRAKMLQRQKFTFSKMSNRDN) is nonhelical region.

Belongs to the paramyosin family. As to quaternary structure, homodimer.

Its subcellular location is the cytoplasm. The protein localises to the myofibril. Functionally, paramyosin is a major structural component of many thick filaments isolated from invertebrate muscles. The polypeptide is Paramyosin (Brugia malayi (Filarial nematode worm)).